The chain runs to 124 residues: Holo-[acyl-carrier-protein] synthase (124 aa).

Residues D5 and E56 each contribute to the Mg(2+) site.

This sequence belongs to the P-Pant transferase superfamily. AcpS family. Mg(2+) serves as cofactor.

It is found in the cytoplasm. It catalyses the reaction apo-[ACP] + CoA = holo-[ACP] + adenosine 3',5'-bisphosphate + H(+). In terms of biological role, transfers the 4'-phosphopantetheine moiety from coenzyme A to a Ser of acyl-carrier-protein. The sequence is that of Holo-[acyl-carrier-protein] synthase from Campylobacter hominis (strain ATCC BAA-381 / DSM 21671 / CCUG 45161 / LMG 19568 / NCTC 13146 / CH001A).